Consider the following 515-residue polypeptide: Maturase K (515 aa).

The protein belongs to the intron maturase 2 family. MatK subfamily.

The protein resides in the plastid. Its subcellular location is the chloroplast. In terms of biological role, usually encoded in the trnK tRNA gene intron. Probably assists in splicing its own and other chloroplast group II introns. The protein is Maturase K of Pinus uncinata (Mountain pine).